Consider the following 206-residue polypeptide: MEKLTKRQQDILDFIKLKVQEKGYPPSVREIGQAVGLASSSTVHGHLSRLEEKGYIRRDPTKPRAIEILGEDRMDTETQSVIQVPIVGKVTAGLPITAVESVEEHFPLPASIVAGADQVFMLRISGDSMIEAGIFDGDLVVVRQQQSAYNGEIVVALTEDNEATVKRFYKEKDHFRLQPENSSLEPIILKQVSVIGKVIGVYRDLH.

Residues 28-48 (VREIGQAVGLASSSTVHGHLS) constitute a DNA-binding region (H-T-H motif). Active-site for autocatalytic cleavage activity residues include serine 128 and lysine 166.

This sequence belongs to the peptidase S24 family. As to quaternary structure, homodimer.

It carries out the reaction Hydrolysis of Ala-|-Gly bond in repressor LexA.. In terms of biological role, represses a number of genes involved in the response to DNA damage (SOS response), including recA and lexA. In the presence of single-stranded DNA, RecA interacts with LexA causing an autocatalytic cleavage which disrupts the DNA-binding part of LexA, leading to derepression of the SOS regulon and eventually DNA repair. The protein is LexA repressor of Bacillus thuringiensis (strain Al Hakam).